The primary structure comprises 305 residues: Acetyl-coenzyme A carboxylase carboxyl transferase subunit beta (305 aa).

The CoA carboxyltransferase N-terminal domain maps to 27–296 (LWVKCSACRE…PAAKADLAAR (270 aa)). 4 residues coordinate Zn(2+): Cys31, Cys34, Cys50, and Cys53. The C4-type zinc finger occupies 31 to 53 (CSACRELIYKKQLNDNLKVCPKC).

Belongs to the AccD/PCCB family. Acetyl-CoA carboxylase is a heterohexamer composed of biotin carboxyl carrier protein (AccB), biotin carboxylase (AccC) and two subunits each of ACCase subunit alpha (AccA) and ACCase subunit beta (AccD). Requires Zn(2+) as cofactor.

Its subcellular location is the cytoplasm. It catalyses the reaction N(6)-carboxybiotinyl-L-lysyl-[protein] + acetyl-CoA = N(6)-biotinyl-L-lysyl-[protein] + malonyl-CoA. It functions in the pathway lipid metabolism; malonyl-CoA biosynthesis; malonyl-CoA from acetyl-CoA: step 1/1. Its function is as follows. Component of the acetyl coenzyme A carboxylase (ACC) complex. Biotin carboxylase (BC) catalyzes the carboxylation of biotin on its carrier protein (BCCP) and then the CO(2) group is transferred by the transcarboxylase to acetyl-CoA to form malonyl-CoA. The chain is Acetyl-coenzyme A carboxylase carboxyl transferase subunit beta from Chloroflexus aggregans (strain MD-66 / DSM 9485).